A 56-amino-acid chain; its full sequence is uncharacterized protein (56 aa).

Helical transmembrane passes span 6 to 26 (VILL…LLNG) and 29 to 49 (VDFL…FVVV).

Its subcellular location is the cell membrane. This is an uncharacterized protein from Bacillus subtilis (strain 168).